Reading from the N-terminus, the 90-residue chain is Small ribosomal subunit protein uS15 (90 aa).

Belongs to the universal ribosomal protein uS15 family. In terms of assembly, part of the 30S ribosomal subunit. Forms a bridge to the 50S subunit in the 70S ribosome, contacting the 23S rRNA.

In terms of biological role, one of the primary rRNA binding proteins, it binds directly to 16S rRNA where it helps nucleate assembly of the platform of the 30S subunit by binding and bridging several RNA helices of the 16S rRNA. Functionally, forms an intersubunit bridge (bridge B4) with the 23S rRNA of the 50S subunit in the ribosome. The protein is Small ribosomal subunit protein uS15 of Tropheryma whipplei (strain TW08/27) (Whipple's bacillus).